A 433-amino-acid chain; its full sequence is 3-phosphoshikimate 1-carboxyvinyltransferase (433 aa).

3-phosphoshikimate contacts are provided by Lys23, Ser24, and Arg28. Residue Lys23 participates in phosphoenolpyruvate binding. Positions 95 and 123 each coordinate phosphoenolpyruvate. Positions 167, 169, 317, and 344 each coordinate 3-phosphoshikimate. Gln169 contributes to the phosphoenolpyruvate binding site. Catalysis depends on Asp317, which acts as the Proton acceptor. 2 residues coordinate phosphoenolpyruvate: Arg348 and Arg390.

The protein belongs to the EPSP synthase family. As to quaternary structure, monomer.

It is found in the cytoplasm. The enzyme catalyses 3-phosphoshikimate + phosphoenolpyruvate = 5-O-(1-carboxyvinyl)-3-phosphoshikimate + phosphate. Its pathway is metabolic intermediate biosynthesis; chorismate biosynthesis; chorismate from D-erythrose 4-phosphate and phosphoenolpyruvate: step 6/7. In terms of biological role, catalyzes the transfer of the enolpyruvyl moiety of phosphoenolpyruvate (PEP) to the 5-hydroxyl of shikimate-3-phosphate (S3P) to produce enolpyruvyl shikimate-3-phosphate and inorganic phosphate. The protein is 3-phosphoshikimate 1-carboxyvinyltransferase of Staphylococcus epidermidis (strain ATCC 12228 / FDA PCI 1200).